We begin with the raw amino-acid sequence, 311 residues long: Malate dehydrogenase (311 aa).

Residues 7 to 13 and aspartate 34 each bind NAD(+); that span reads GAAGGIG. Substrate contacts are provided by arginine 81 and arginine 87. Residues asparagine 94 and 117–119 contribute to the NAD(+) site; that span reads ITN. Substrate contacts are provided by asparagine 119 and arginine 153. Histidine 177 functions as the Proton acceptor in the catalytic mechanism. Residue methionine 227 coordinates NAD(+).

Belongs to the LDH/MDH superfamily. MDH type 1 family. As to quaternary structure, homodimer.

The enzyme catalyses (S)-malate + NAD(+) = oxaloacetate + NADH + H(+). Functionally, catalyzes the reversible oxidation of malate to oxaloacetate. The polypeptide is Malate dehydrogenase (Shewanella sediminis (strain HAW-EB3)).